The primary structure comprises 729 residues: Phosphoribosylformylglycinamidine synthase subunit PurL (729 aa).

His-54 is a catalytic residue. Residues Tyr-57 and Lys-96 each contribute to the ATP site. Glu-98 provides a ligand contact to Mg(2+). Residues 99–102 (SHNH) and Arg-121 contribute to the substrate site. The active-site Proton acceptor is the His-100. Asp-122 serves as a coordination point for Mg(2+). Gln-245 contributes to the substrate binding site. Mg(2+) is bound at residue Asp-273. 317–319 (ETQ) lines the substrate pocket. The ATP site is built by Asp-495 and Gly-532. Residue Asn-533 participates in Mg(2+) binding. Ser-535 lines the substrate pocket.

Belongs to the FGAMS family. In terms of assembly, monomer. Part of the FGAM synthase complex composed of 1 PurL, 1 PurQ and 2 PurS subunits.

It localises to the cytoplasm. The catalysed reaction is N(2)-formyl-N(1)-(5-phospho-beta-D-ribosyl)glycinamide + L-glutamine + ATP + H2O = 2-formamido-N(1)-(5-O-phospho-beta-D-ribosyl)acetamidine + L-glutamate + ADP + phosphate + H(+). Its pathway is purine metabolism; IMP biosynthesis via de novo pathway; 5-amino-1-(5-phospho-D-ribosyl)imidazole from N(2)-formyl-N(1)-(5-phospho-D-ribosyl)glycinamide: step 1/2. In terms of biological role, part of the phosphoribosylformylglycinamidine synthase complex involved in the purines biosynthetic pathway. Catalyzes the ATP-dependent conversion of formylglycinamide ribonucleotide (FGAR) and glutamine to yield formylglycinamidine ribonucleotide (FGAM) and glutamate. The FGAM synthase complex is composed of three subunits. PurQ produces an ammonia molecule by converting glutamine to glutamate. PurL transfers the ammonia molecule to FGAR to form FGAM in an ATP-dependent manner. PurS interacts with PurQ and PurL and is thought to assist in the transfer of the ammonia molecule from PurQ to PurL. This Staphylococcus saprophyticus subsp. saprophyticus (strain ATCC 15305 / DSM 20229 / NCIMB 8711 / NCTC 7292 / S-41) protein is Phosphoribosylformylglycinamidine synthase subunit PurL.